Consider the following 491-residue polypeptide: Large ribosomal subunit protein mL101 (rPPR4) (491 aa).

PPR repeat units follow at residues 122-156 (TELTYGSLLNCYCKELLTEKAEGLLNKMKELNITP), 157-191 (SSMSYNSLMTLYTKTGETEKVPAMIQELKAENVMP), 192-226 (DSYTYNVWMRALAATNDISGVERVIEEMNRDGRVA), 228-262 (DWTTYSNMASIYVDAGLSQKAEKALQELEMKNTQR), 263-293 (DFTAYQFLITLYGRLGKLTEVYRIWRSLRLA), 298-328 (SNVAYLNMIQVLVKLNDLPGAETLFKEWQAN), 333-367 (DIRIVNVLIGAYAQEGLIQKANELKEKAPRRGGKL), and 368-402 (NAKTWEIFMDYYVKSGDMARALECMSKAVSIGKGD).

This sequence belongs to the PPR family. P subfamily. Component of the mitochondrial ribosome large subunit.

It localises to the mitochondrion. The sequence is that of Large ribosomal subunit protein mL101 (rPPR4) from Arabidopsis thaliana (Mouse-ear cress).